The following is a 632-amino-acid chain: Probable extracellular metalloproteinase 2 (632 aa).

The first 19 residues, 1 to 19 (MHGLLLAGLAAALPLGVAG), serve as a signal peptide directing secretion. Residues 20–244 (LPARQQSGLS…VHNVVDYVAS (225 aa)) constitute a propeptide that is removed on maturation. Residues asparagine 81 and asparagine 270 are each glycosylated (N-linked (GlcNAc...) asparagine). A Zn(2+)-binding site is contributed by histidine 429. Glutamate 430 is a catalytic residue. Histidine 433 contributes to the Zn(2+) binding site.

This sequence belongs to the peptidase M36 family. Zn(2+) is required as a cofactor.

The protein localises to the secreted. In terms of biological role, secreted metalloproteinase probably acting as a virulence factor. In Arthroderma benhamiae (strain ATCC MYA-4681 / CBS 112371) (Trichophyton mentagrophytes), this protein is Probable extracellular metalloproteinase 2 (MEP2).